A 686-amino-acid chain; its full sequence is Mannan-binding lectin serine protease 2 (686 aa).

The signal sequence occupies residues 1 to 15 (MRLLTLLGLLCGSVA). In terms of domain architecture, CUB 1 spans 16 to 137 (TPLGPKWPEP…TGFEAFYAAE (122 aa)). Positions 67, 75, 120, 122, 123, 138, 139, and 141 each coordinate Ca(2+). Residues Cys-72 and Cys-90 are joined by a disulfide bond. Residues 138–181 (DIDECQVAPGEAPTCDHHCHNHLGGFYCSCRAGYVLHRNKRTCS) form the EGF-like; calcium-binding domain. 12 disulfides stabilise this stretch: Cys-142/Cys-156, Cys-152/Cys-165, Cys-167/Cys-180, Cys-184/Cys-211, Cys-241/Cys-259, Cys-300/Cys-348, Cys-328/Cys-361, Cys-366/Cys-412, Cys-396/Cys-430, Cys-434/Cys-552, Cys-598/Cys-618, and Cys-629/Cys-660. Residues Asn-158, His-159, and Gly-162 each contribute to the Ca(2+) site. Position 158 is a (3R)-3-hydroxyasparagine (Asn-158). Residues 184–296 (CSGQVFTQRS…TGWKIHYTST (113 aa)) enclose the CUB 2 domain. Sushi domains lie at 298–363 (QPCP…ACSI) and 364–432 (VDCG…VCEP). Positions 445-684 (IYGGQKAKPG…YIPWIENIIS (240 aa)) constitute a Peptidase S1 domain. Active-site charge relay system residues include His-483 and Asp-532. Ser-633 serves as the catalytic Charge relay system.

The protein belongs to the peptidase S1 family. Homodimer; disulfide-linked. Binds MBL2. Isoform 2 binds to MASP1. Binds SERPING1. Dimerization and MBL2 binding requires calcium ions. Post-translationally, the iron and 2-oxoglutarate dependent 3-hydroxylation of aspartate and asparagine is (R) stereospecific within EGF domains. In terms of processing, activated by cleavage after Arg-444. The uncleaved zymogen is inactive towards synthetic substrates, but has sufficient activity to effect autocatalytic cleavage. As to expression, plasma.

It is found in the secreted. It catalyses the reaction Selective cleavage after Arg-223 in complement component C2 (-Ser-Leu-Gly-Arg-|-Lys-Ile-Gln-Ile) and after Arg-76 in complement component C4 (-Gly-Leu-Gln-Arg-|-Ala-Leu-Glu-Ile).. Serum protease that plays an important role in the activation of the complement system via mannose-binding lectin. After activation by auto-catalytic cleavage it cleaves C2 and C4, leading to their activation and to the formation of C3 convertase. The polypeptide is Mannan-binding lectin serine protease 2 (MASP2) (Homo sapiens (Human)).